A 5005-amino-acid chain; its full sequence is Bridge-like lipid transfer protein family member 1 (5005 aa).

A helical membrane pass occupies residues 26–46 (NVVWLLVATILSCGWIIYLTY). Disordered stretches follow at residues 691–721 (LRPS…LPPD), 1218–1257 (LSLQ…SSVA), and 1269–1310 (GTKR…LKRQ). Composition is skewed to low complexity over residues 700-711 (RVVSSPSTSSRP) and 1226-1240 (SHSS…SSSS). The span at 1248–1257 (GEKESPSSVA) shows a compositional bias: basic and acidic residues. The span at 1278-1303 (SIPTEISGNSPVSPNTQDKSVGQSPL) shows a compositional bias: polar residues. 3 positions are modified to phosphoserine: S1301, S1305, and S1323. Phosphothreonine is present on T1325. Disordered regions lie at residues 1343–1376 (SDVS…SNSF), 1400–1427 (EFEP…QQID), 1521–1548 (TNKR…SSSF), and 1676–1704 (FSEN…QGQA). 2 positions are modified to phosphoserine: S1355 and S1406. The span at 1521–1530 (TNKRTSKSSL) shows a compositional bias: basic residues. Residues 1691-1704 (TEQSTIGTTNQGQA) show a composition bias toward polar residues. S1805 and S1808 each carry phosphoserine. Disordered stretches follow at residues 1924 to 1991 (DTER…PLMP), 2401 to 2420 (SDQN…QDDV), and 2598 to 2677 (TAGS…KDVV). Polar residues-rich tracts occupy residues 1931 to 1948 (LTSN…YNTD), 1959 to 1971 (TSPS…NSVS), 2401 to 2418 (SDQN…TSQD), and 2598 to 2608 (TAGSASPTPTF). Residues S2601 and S2603 each carry the phosphoserine modification. A compositionally biased stretch (low complexity) spans 2619–2638 (SDFSRSSRGSLNGGNRVNNA). Residues 2643-2665 (TNNENNKKESRNKNSLGRSERRT) show a composition bias toward basic and acidic residues. At S2755 the chain carries Phosphoserine. The interval 2928-2967 (RQPSTAPQPVKEDIATPLPSEKTPTSVNQTPVETNEFPQL) is disordered. Polar residues predominate over residues 2949 to 2964 (KTPTSVNQTPVETNEF). The residue at position 3562 (S3562) is a Phosphoserine. A compositionally biased stretch (polar residues) spans 3612–3622 (PSYSRSKSISA). Disordered stretches follow at residues 3612 to 3661 (PSYS…VTFN), 3686 to 3744 (SSNS…ERFY), 3821 to 3843 (RRSY…KKFQ), 3914 to 3954 (YGMK…KGKG), 4088 to 4146 (GTTY…SSSS), and 4325 to 4394 (QSAS…KAAS). S3653 bears the Phosphoserine mark. The segment covering 3686 to 3700 (SSNSEGSCSVFSSPK) has biased composition (polar residues). Acidic residues predominate over residues 3727-3736 (EDSEKDEKDE). The span at 3821–3837 (RRSYDRSSRSLDQDSPS) shows a compositional bias: basic and acidic residues. Composition is skewed to polar residues over residues 3931-3940 (TVQSKTNTLL) and 4098-4113 (PGGN…SASK). Residues 4122–4146 (LGSPLGRSRHSSSQSDLTSSSSSSS) are compositionally biased toward low complexity. S4124 carries the post-translational modification Phosphoserine. Residues 4325-4358 (QSASFTHMPQSPNVFNEHMTNSTMSPGTVGQSLK) are compositionally biased toward polar residues. The span at 4359 to 4372 (SPASIRSRSVSDSS) shows a compositional bias: low complexity. Residues 4381–4394 (KTSTPFNKSNKAAS) are compositionally biased toward polar residues.

Highly expressed in testis and ovary. Weakly or not expressed in other tissues.

It localises to the cell membrane. It is found in the endoplasmic reticulum membrane. The protein resides in the mitochondrion membrane. Functionally, tube-forming lipid transport protein which provides phosphatidylethanolamine for glycosylphosphatidylinositol (GPI) anchor synthesis in the endoplasmic reticulum. Plays a role in endosomal trafficking and endosome recycling. Also involved in the actin cytoskeleton and cilia structural dynamics. Acts as a regulator of phagocytosis. The chain is Bridge-like lipid transfer protein family member 1 from Homo sapiens (Human).